The primary structure comprises 323 residues: Ferrochelatase (323 aa).

2 residues coordinate Fe cation: histidine 196 and glutamate 277.

This sequence belongs to the ferrochelatase family.

The protein localises to the cytoplasm. The catalysed reaction is heme b + 2 H(+) = protoporphyrin IX + Fe(2+). It functions in the pathway porphyrin-containing compound metabolism; protoheme biosynthesis; protoheme from protoporphyrin-IX: step 1/1. In terms of biological role, catalyzes the ferrous insertion into protoporphyrin IX. The sequence is that of Ferrochelatase from Haemophilus influenzae (strain ATCC 51907 / DSM 11121 / KW20 / Rd).